The following is a 179-amino-acid chain: ATP synthase subunit delta (179 aa).

Belongs to the ATPase delta chain family. As to quaternary structure, F-type ATPases have 2 components, F(1) - the catalytic core - and F(0) - the membrane proton channel. F(1) has five subunits: alpha(3), beta(3), gamma(1), delta(1), epsilon(1). F(0) has three main subunits: a(1), b(2) and c(10-14). The alpha and beta chains form an alternating ring which encloses part of the gamma chain. F(1) is attached to F(0) by a central stalk formed by the gamma and epsilon chains, while a peripheral stalk is formed by the delta and b chains.

The protein localises to the cell inner membrane. Functionally, f(1)F(0) ATP synthase produces ATP from ADP in the presence of a proton or sodium gradient. F-type ATPases consist of two structural domains, F(1) containing the extramembraneous catalytic core and F(0) containing the membrane proton channel, linked together by a central stalk and a peripheral stalk. During catalysis, ATP synthesis in the catalytic domain of F(1) is coupled via a rotary mechanism of the central stalk subunits to proton translocation. In terms of biological role, this protein is part of the stalk that links CF(0) to CF(1). It either transmits conformational changes from CF(0) to CF(1) or is implicated in proton conduction. The polypeptide is ATP synthase subunit delta (Burkholderia cenocepacia (strain ATCC BAA-245 / DSM 16553 / LMG 16656 / NCTC 13227 / J2315 / CF5610) (Burkholderia cepacia (strain J2315))).